An 87-amino-acid chain; its full sequence is MARVTVEDCLEHVDNRFELVMLSTKRARQLATGGKEPLVQWENDKPTVVALREIAEGLMSYEFIANAEIVEDEPLFAAFEDESNEAV.

Belongs to the RNA polymerase subunit omega family. As to quaternary structure, the RNAP catalytic core consists of 2 alpha, 1 beta, 1 beta' and 1 omega subunit. When a sigma factor is associated with the core the holoenzyme is formed, which can initiate transcription.

The catalysed reaction is RNA(n) + a ribonucleoside 5'-triphosphate = RNA(n+1) + diphosphate. Promotes RNA polymerase assembly. Latches the N- and C-terminal regions of the beta' subunit thereby facilitating its interaction with the beta and alpha subunits. This chain is DNA-directed RNA polymerase subunit omega, found in Pseudomonas fluorescens (strain SBW25).